The primary structure comprises 497 residues: uncharacterized protein (497 aa).

Residues aspartate 12, threonine 13, and cysteine 52 each contribute to the Ca(2+) site. Cysteine 52 (nucleophile) is an active-site residue. Residue cysteine 52 is modified to 3-oxoalanine (Cys). The active site involves histidine 102. Ca(2+)-binding residues include aspartate 284 and histidine 285.

It belongs to the sulfatase family. Ca(2+) serves as cofactor. In terms of processing, the conversion to 3-oxoalanine (also known as C-formylglycine, FGly), of a serine or cysteine residue in prokaryotes and of a cysteine residue in eukaryotes, is critical for catalytic activity.

This is an uncharacterized protein from Escherichia coli (strain K12).